The primary structure comprises 87 residues: Serine protease inhibitor Kazal-type 12 (87 aa).

The signal sequence occupies residues 1–22; it reads MKPAGAFLLLISLACLFLSVDA. The Kazal-like domain maps to 26–87; it reads GGFQAFCSNY…KLGFKHEGKC (62 aa). Disulfide bonds link cysteine 32-cysteine 68, cysteine 46-cysteine 65, and cysteine 54-cysteine 87.

As to expression, expressed in epydiymis, in the caput.

It localises to the secreted. Functionally, inhibits trypsin. This is Serine protease inhibitor Kazal-type 12 (Spink12) from Mus musculus (Mouse).